Here is a 200-residue protein sequence, read N- to C-terminus: Protein OPI10 homolog (200 aa).

The protein belongs to the OPI10 family.

The protein resides in the cytoplasm. It localises to the nucleus envelope. This Schizosaccharomyces pombe (strain 972 / ATCC 24843) (Fission yeast) protein is Protein OPI10 homolog.